Here is a 1012-residue protein sequence, read N- to C-terminus: Vacuolar protein-sorting protein bro-1 (1012 aa).

In terms of domain architecture, BRO1 spans 5–407 (PMISVPLKAT…ERVETANSEM (403 aa)). The stretch at 301 to 330 (ILADATKRHLATVKEKLEELNKENDMIYHQ) forms a coiled coil. The interval 558–578 (RKSRKSNPNSPATVEPNLLEA) is disordered. The stretch at 719-775 (LQSAKNWYKDMRQEAESLEKNVEAFVNNRRAEGAQLLNQIEQDRAANKSSHAALEQE) forms a coiled coil. 2 disordered regions span residues 784–812 (MSMD…SFAP) and 827–1012 (NFST…SAWK). Positions 827–842 (NFSTQYPASPPATQVP) are enriched in polar residues. Positions 844-857 (NPGGQQQTPYQQYN) are enriched in low complexity. Residues 892-913 (QTSFAQSRPYSLTTYGNPSALN) show a composition bias toward polar residues. The segment covering 914 to 930 (PQGGQPQQSQPGGYVPP) has biased composition (low complexity). The segment covering 931–945 (GFVPPPPPPGPPPLG) has biased composition (pro residues). The segment covering 970–985 (PGSGQQGPQGQQGGWG) has biased composition (gly residues).

The protein belongs to the BRO1 family.

It is found in the cytoplasm. It localises to the endosome. Functionally, involved in concentration and sorting of cargo proteins of the multivesicular body (MVB) for incorporation into intralumenal vesicles. This chain is Vacuolar protein-sorting protein bro-1 (bro-1), found in Neurospora crassa (strain ATCC 24698 / 74-OR23-1A / CBS 708.71 / DSM 1257 / FGSC 987).